The chain runs to 99 residues: uncharacterized protein (99 aa).

Residues 76 to 96 traverse the membrane as a helical segment; the sequence is VLLGLASGMIGGIIGMFMWVL.

It localises to the host membrane. This is an uncharacterized protein from Haemophilus phage HP1 (strain HP1c1) (Bacteriophage HP1).